The chain runs to 327 residues: Complex I intermediate-associated protein 30, mitochondrial (327 aa).

Residues 1–24 (MALVHKLLRGTYFLRKFSKPTSAL) constitute a mitochondrion transit peptide. Residues 42-63 (PVASPGKASSQRKTEGDLQGDH) form a disordered region. Residues 53 to 63 (RKTEGDLQGDH) are compositionally biased toward basic and acidic residues. Residue S318 is modified to Phosphoserine.

Belongs to the CIA30 family. As to quaternary structure, part of the mitochondrial complex I assembly/MCIA complex that comprises at least the core subunits TMEM126B, NDUFAF1, ECSIT and ACAD9 and complement subunits such as COA1 and TMEM186. Interacts with ECSIT. Interacts with ACAD9. At early stages of complex I assembly, it is found in intermediate subcomplexes that contain different subunits including NDUFB6, NDUFA6, NDUFA9, NDUFS3, NDUFS7, ND1, ND2 and ND3. Interacts with TMEM70 and TMEM242. As to expression, ubiquitous.

It is found in the mitochondrion. It localises to the mitochondrion matrix. Its function is as follows. As part of the MCIA complex, involved in the assembly of the mitochondrial complex I. The chain is Complex I intermediate-associated protein 30, mitochondrial from Homo sapiens (Human).